Here is a 388-residue protein sequence, read N- to C-terminus: Succinate--CoA ligase [ADP-forming] subunit beta (388 aa).

The ATP-grasp domain occupies 9–244 (KEILRKFGVA…LDEEDPAEIE (236 aa)). ATP is bound by residues K46, 53-55 (GRG), E99, A102, and E107. The Mg(2+) site is built by N199 and D213. Residues N264 and 321 to 323 (GIM) contribute to the substrate site.

This sequence belongs to the succinate/malate CoA ligase beta subunit family. In terms of assembly, heterotetramer of two alpha and two beta subunits. Requires Mg(2+) as cofactor.

The enzyme catalyses succinate + ATP + CoA = succinyl-CoA + ADP + phosphate. The catalysed reaction is GTP + succinate + CoA = succinyl-CoA + GDP + phosphate. It participates in carbohydrate metabolism; tricarboxylic acid cycle; succinate from succinyl-CoA (ligase route): step 1/1. Functionally, succinyl-CoA synthetase functions in the citric acid cycle (TCA), coupling the hydrolysis of succinyl-CoA to the synthesis of either ATP or GTP and thus represents the only step of substrate-level phosphorylation in the TCA. The beta subunit provides nucleotide specificity of the enzyme and binds the substrate succinate, while the binding sites for coenzyme A and phosphate are found in the alpha subunit. The chain is Succinate--CoA ligase [ADP-forming] subunit beta from Burkholderia ambifaria (strain MC40-6).